Here is a 641-residue protein sequence, read N- to C-terminus: Probable potassium transport system protein Kup (641 aa).

12 helical membrane passes run 29–49 (ISLA…LYAI), 66–86 (ILGV…LKYL), 119–139 (WVLV…AMIT), 156–176 (PAFA…LFLF), 185–205 (GALF…LGII), 231–251 (LHGF…EALY), 266–286 (WVLF…AFLL), 298–318 (ALVP…ATVI), 356–376 (IYVP…VLGF), 384–404 (AAYG…FFFV), 415–435 (VLWA…GASM), and 438–458 (LFHG…LMNT).

It belongs to the HAK/KUP transporter (TC 2.A.72) family.

It localises to the cell inner membrane. The enzyme catalyses K(+)(in) + H(+)(in) = K(+)(out) + H(+)(out). In terms of biological role, transport of potassium into the cell. Likely operates as a K(+):H(+) symporter. The sequence is that of Probable potassium transport system protein Kup from Chlorobium phaeovibrioides (strain DSM 265 / 1930) (Prosthecochloris vibrioformis (strain DSM 265)).